The following is a 396-amino-acid chain: Elongation factor Tu 2 (396 aa).

A tr-type G domain is found at 10 to 206 (KPHCNIGTIG…AVDAYIPQPE (197 aa)). The tract at residues 19 to 26 (GHVDHGKT) is G1. 19 to 26 (GHVDHGKT) contributes to the GTP binding site. Thr26 serves as a coordination point for Mg(2+). Positions 60–64 (GITIS) are G2. The interval 81–84 (DCPG) is G3. Residues 81–85 (DCPGH) and 136–139 (NKCD) each bind GTP. The G4 stretch occupies residues 136–139 (NKCD). The tract at residues 174 to 176 (SAL) is G5.

This sequence belongs to the TRAFAC class translation factor GTPase superfamily. Classic translation factor GTPase family. EF-Tu/EF-1A subfamily. Monomer.

The protein resides in the cytoplasm. It carries out the reaction GTP + H2O = GDP + phosphate + H(+). In terms of biological role, GTP hydrolase that promotes the GTP-dependent binding of aminoacyl-tRNA to the A-site of ribosomes during protein biosynthesis. This is Elongation factor Tu 2 from Rhodopseudomonas palustris (strain BisB5).